Here is an 814-residue protein sequence, read N- to C-terminus: G-type lectin S-receptor-like serine/threonine-protein kinase At1g61400 (814 aa).

The N-terminal stretch at 1–34 (MDFLFLLLERKNKHMGKKRVVLLWLSIFISFSSA) is a signal peptide. The Bulb-type lectin domain maps to 35-154 (EITEESPLSI…VSGRTLWESF (120 aa)). Topologically, residues 35–436 (EITEESPLSI…ELDVNKRKKT (402 aa)) are extracellular. Asn63, Asn104, Asn127, and Asn246 each carry an N-linked (GlcNAc...) asparagine glycan. Residues 288–324 (PANSCDIYGVCGPFGFCVISVPPKCKCFKGFIPKSIE) enclose the EGF-like; atypical domain. 2 cysteine pairs are disulfide-bonded: Cys292-Cys304 and Cys298-Cys312. N-linked (GlcNAc...) asparagine glycosylation is found at Asn330, Asn346, and Asn385. Residues 343-425 (CQGNSTGKDA…GELLSIRLAR (83 aa)) enclose the PAN domain. Disulfide bonds link Cys378/Cys399 and Cys382/Cys388. A helical transmembrane segment spans residues 437 to 457 (IIAITVSLTLFVILGFTAFGF). Over 458–814 (WRRRVEQNAL…EMTESVIHGR (357 aa)) the chain is Cytoplasmic. A Protein kinase domain is found at 500–785 (FSLSNKLGHG…DLPLPKQPTF (286 aa)). Residues 506 to 514 (LGHGGFGSV) and Lys528 contribute to the ATP site. Residues Ser534 and Ser549 each carry the phosphoserine modification. Residues 589-606 (KKRLEIDWPKRFDIIQGI) form a caM-binding region. Catalysis depends on Asp625, which acts as the Proton acceptor. Residues Ser629 and Ser642 each carry the phosphoserine modification. At Thr659 the chain carries Phosphothreonine. Phosphoserine is present on residues Ser702 and Ser796.

The protein belongs to the protein kinase superfamily. Ser/Thr protein kinase family.

It is found in the cell membrane. It carries out the reaction L-seryl-[protein] + ATP = O-phospho-L-seryl-[protein] + ADP + H(+). The catalysed reaction is L-threonyl-[protein] + ATP = O-phospho-L-threonyl-[protein] + ADP + H(+). The chain is G-type lectin S-receptor-like serine/threonine-protein kinase At1g61400 from Arabidopsis thaliana (Mouse-ear cress).